The primary structure comprises 137 residues: MRTLWIVAVCLIGVEGNLYQFGNMIFKMTKKSALLSYSNYGCYCGWGGKGKPQDATDRCCFVHDCCYGRVNGCDPKLSIYSYSFENGDIVCGGDDPCLRAVCECDRVAAICFGENLNTYDKKYKNYPSSHCTETEQC.

The signal sequence occupies residues methionine 1–glycine 16. Cystine bridges form between cysteine 42/cysteine 131, cysteine 44/cysteine 60, cysteine 59/cysteine 111, cysteine 65/cysteine 137, cysteine 66/cysteine 104, cysteine 73/cysteine 97, and cysteine 91/cysteine 102. 3 residues coordinate Ca(2+): tyrosine 43, glycine 45, and glycine 47. The active site involves histidine 63. Aspartate 64 lines the Ca(2+) pocket. The active site involves aspartate 105.

This sequence belongs to the phospholipase A2 family. Group II subfamily. D49 sub-subfamily. Ca(2+) serves as cofactor. In terms of tissue distribution, expressed by the venom gland.

It is found in the secreted. It catalyses the reaction a 1,2-diacyl-sn-glycero-3-phosphocholine + H2O = a 1-acyl-sn-glycero-3-phosphocholine + a fatty acid + H(+). Snake venom phospholipase A2 (PLA2) that has enzymatic activity but is non-toxic. Displays low binding affinity and enzymatic activity on phosphatidylserine-containing vesicles and HEK-293 plasma membranes, in contrast to ammodytoxins that have high activity on these phospholipids. PLA2 catalyzes the calcium-dependent hydrolysis of the 2-acyl groups in 3-sn-phosphoglycerides. The sequence is that of Neutral phospholipase A2 ammodytin I2 from Vipera ammodytes ammodytes (Western sand viper).